A 307-amino-acid polypeptide reads, in one-letter code: MNDLSTMSSLTKEEILQLIEEATALKKGKQELGLAGEFVANLFFEPSTRTRFSFEVAEKKLGMNVLSLDAASTSVQKGETLYDTVKTLESIGVKACVIRDSTDEYYNELIGKVGIPIINAGDGCGQHPTQSLLDLMTIYEEFGGFEGLTISIHGDIKHSRVARSNAEVLSRLGATVLFSGPASFQDEQNPHGTYVQVDEAIKQSDVVMLLRIQHERHTEKMGNEDYLSTYGLTVNRAKNMKERAIIMHPAPVNRGVEIDDSLVESKQSRIFKQMENGVYVRMAVLKRAFQNSKLHQKGRESVYVVSH.

The carbamoyl phosphate site is built by R49 and T50. K77 contacts L-aspartate. Residues R99, H127, and Q130 each coordinate carbamoyl phosphate. Residues R160 and R211 each coordinate L-aspartate. Positions 250 and 251 each coordinate carbamoyl phosphate.

This sequence belongs to the aspartate/ornithine carbamoyltransferase superfamily. ATCase family. As to quaternary structure, heterododecamer (2C3:3R2) of six catalytic PyrB chains organized as two trimers (C3), and six regulatory PyrI chains organized as three dimers (R2).

It carries out the reaction carbamoyl phosphate + L-aspartate = N-carbamoyl-L-aspartate + phosphate + H(+). It functions in the pathway pyrimidine metabolism; UMP biosynthesis via de novo pathway; (S)-dihydroorotate from bicarbonate: step 2/3. Functionally, catalyzes the condensation of carbamoyl phosphate and aspartate to form carbamoyl aspartate and inorganic phosphate, the committed step in the de novo pyrimidine nucleotide biosynthesis pathway. This is Aspartate carbamoyltransferase catalytic subunit from Bacillus pumilus (strain SAFR-032).